We begin with the raw amino-acid sequence, 126 residues long: Large ribosomal subunit protein bL17 (126 aa).

The protein belongs to the bacterial ribosomal protein bL17 family. Part of the 50S ribosomal subunit. Contacts protein L32.

The chain is Large ribosomal subunit protein bL17 from Coxiella burnetii (strain CbuG_Q212) (Coxiella burnetii (strain Q212)).